Here is a 428-residue protein sequence, read N- to C-terminus: Glutamine synthetase, chloroplastic (428 aa).

A chloroplast-targeting transit peptide spans 1 to 48 (MAQAVVPAMQCQVGAVRARPAAAAAAAGGRVWGVRRTGRGTSGFRVMA). The GS beta-grasp domain occupies 75 to 155 (IIAEYIWVGG…VMCDTYTPAG (81 aa)). The segment at 95 to 120 (TISKPVEDPSELPKWNYDGSSTGQAP) is disordered. Positions 159 to 428 (PTNKRNRAAQ…LAAKKLALKV (270 aa)) constitute a GS catalytic domain.

Belongs to the glutamine synthetase family. In terms of assembly, homooctamer.

The protein resides in the plastid. It is found in the chloroplast. The enzyme catalyses L-glutamate + NH4(+) + ATP = L-glutamine + ADP + phosphate + H(+). Functionally, light-modulated chloroplastic glutamine synthetase, encoded by a nuclear gene and expressed primarily in leaves, and which is responsible for the reassimilation of the ammonia generated by photorespiration. The chain is Glutamine synthetase, chloroplastic from Oryza sativa subsp. japonica (Rice).